The sequence spans 555 residues: CTP synthase (555 aa).

The interval 1-271 (MVKRGKKTKY…DDKLAELFNI (271 aa)) is amidoligase domain. Ser19 is a binding site for CTP. Ser19 provides a ligand contact to UTP. ATP-binding positions include 20–25 (SLGKGL) and Asp77. Mg(2+) is bound by residues Asp77 and Glu145. Residues 152–154 (DIE), 192–197 (KTKPTQ), and Lys228 each bind CTP. UTP contacts are provided by residues 192–197 (KTKPTQ) and Lys228. Positions 297 to 537 (RIGIVGKYVE…VKAALEHRDA (241 aa)) constitute a Glutamine amidotransferase type-1 domain. Gly358 provides a ligand contact to L-glutamine. The active-site Nucleophile; for glutamine hydrolysis is Cys385. Residues 386–389 (LGLQ), Glu409, and Arg466 each bind L-glutamine. Active-site residues include His510 and Glu512. Residues 536-555 (DAQQRQPSAEVKKLPVGKNG) form a disordered region.

Belongs to the CTP synthase family. In terms of assembly, homotetramer.

The enzyme catalyses UTP + L-glutamine + ATP + H2O = CTP + L-glutamate + ADP + phosphate + 2 H(+). It carries out the reaction L-glutamine + H2O = L-glutamate + NH4(+). The catalysed reaction is UTP + NH4(+) + ATP = CTP + ADP + phosphate + 2 H(+). It participates in pyrimidine metabolism; CTP biosynthesis via de novo pathway; CTP from UDP: step 2/2. Allosterically activated by GTP, when glutamine is the substrate; GTP has no effect on the reaction when ammonia is the substrate. The allosteric effector GTP functions by stabilizing the protein conformation that binds the tetrahedral intermediate(s) formed during glutamine hydrolysis. Inhibited by the product CTP, via allosteric rather than competitive inhibition. Functionally, catalyzes the ATP-dependent amination of UTP to CTP with either L-glutamine or ammonia as the source of nitrogen. Regulates intracellular CTP levels through interactions with the four ribonucleotide triphosphates. The protein is CTP synthase of Anaeromyxobacter dehalogenans (strain 2CP-C).